A 132-amino-acid polypeptide reads, in one-letter code: Small ribosomal subunit protein uS8c (132 aa).

Belongs to the universal ribosomal protein uS8 family. In terms of assembly, part of the 30S ribosomal subunit.

Its subcellular location is the plastid. It localises to the chloroplast. One of the primary rRNA binding proteins, it binds directly to 16S rRNA central domain where it helps coordinate assembly of the platform of the 30S subunit. The chain is Small ribosomal subunit protein uS8c (rps8) from Pinus thunbergii (Japanese black pine).